The chain runs to 338 residues: Fructose-1,6-bisphosphatase class 1 1 (338 aa).

Residues E94, D116, L118, and D119 each contribute to the Mg(2+) site. Substrate-binding positions include 119–122, N210, and K276; that span reads DGSS. Residue E282 participates in Mg(2+) binding.

This sequence belongs to the FBPase class 1 family. Homotetramer. It depends on Mg(2+) as a cofactor.

It localises to the cytoplasm. It carries out the reaction beta-D-fructose 1,6-bisphosphate + H2O = beta-D-fructose 6-phosphate + phosphate. It functions in the pathway carbohydrate biosynthesis; gluconeogenesis. This is Fructose-1,6-bisphosphatase class 1 1 from Paraburkholderia phymatum (strain DSM 17167 / CIP 108236 / LMG 21445 / STM815) (Burkholderia phymatum).